Consider the following 448-residue polypeptide: Glutamyl-tRNA reductase (448 aa).

Residues 49 to 52, S109, 114 to 116, and Q120 contribute to the substrate site; these read TCNR and ETQ. The Nucleophile role is filled by C50. 189 to 194 contributes to the NADP(+) binding site; the sequence is GAGEMS.

Belongs to the glutamyl-tRNA reductase family. In terms of assembly, homodimer.

The catalysed reaction is (S)-4-amino-5-oxopentanoate + tRNA(Glu) + NADP(+) = L-glutamyl-tRNA(Glu) + NADPH + H(+). Its pathway is porphyrin-containing compound metabolism; protoporphyrin-IX biosynthesis; 5-aminolevulinate from L-glutamyl-tRNA(Glu): step 1/2. In terms of biological role, catalyzes the NADPH-dependent reduction of glutamyl-tRNA(Glu) to glutamate 1-semialdehyde (GSA). The chain is Glutamyl-tRNA reductase from Staphylococcus haemolyticus (strain JCSC1435).